Here is a 286-residue protein sequence, read N- to C-terminus: Phosphatidylserine decarboxylase proenzyme (286 aa).

Catalysis depends on charge relay system; for autoendoproteolytic cleavage activity residues aspartate 90, histidine 147, and serine 252. Residue serine 252 is the Schiff-base intermediate with substrate; via pyruvic acid; for decarboxylase activity of the active site. At serine 252 the chain carries Pyruvic acid (Ser); by autocatalysis.

This sequence belongs to the phosphatidylserine decarboxylase family. PSD-B subfamily. Prokaryotic type I sub-subfamily. As to quaternary structure, heterodimer of a large membrane-associated beta subunit and a small pyruvoyl-containing alpha subunit. Pyruvate is required as a cofactor. Post-translationally, is synthesized initially as an inactive proenzyme. Formation of the active enzyme involves a self-maturation process in which the active site pyruvoyl group is generated from an internal serine residue via an autocatalytic post-translational modification. Two non-identical subunits are generated from the proenzyme in this reaction, and the pyruvate is formed at the N-terminus of the alpha chain, which is derived from the carboxyl end of the proenzyme. The autoendoproteolytic cleavage occurs by a canonical serine protease mechanism, in which the side chain hydroxyl group of the serine supplies its oxygen atom to form the C-terminus of the beta chain, while the remainder of the serine residue undergoes an oxidative deamination to produce ammonia and the pyruvoyl prosthetic group on the alpha chain. During this reaction, the Ser that is part of the protease active site of the proenzyme becomes the pyruvoyl prosthetic group, which constitutes an essential element of the active site of the mature decarboxylase.

Its subcellular location is the cell membrane. The catalysed reaction is a 1,2-diacyl-sn-glycero-3-phospho-L-serine + H(+) = a 1,2-diacyl-sn-glycero-3-phosphoethanolamine + CO2. It functions in the pathway phospholipid metabolism; phosphatidylethanolamine biosynthesis; phosphatidylethanolamine from CDP-diacylglycerol: step 2/2. Catalyzes the formation of phosphatidylethanolamine (PtdEtn) from phosphatidylserine (PtdSer). The polypeptide is Phosphatidylserine decarboxylase proenzyme (Pseudomonas fluorescens (strain SBW25)).